A 180-amino-acid chain; its full sequence is MASMMSNAAVVGRTTPAQASMVAPFTGLKSVSAFPVTKKSNDITSIASNGGRVQCMQVWPPLGKKKFETLSYLPPLSEESLMKEVQYLLNNGWVPCLEFEPTHGFVYREHGNTPGYYDGRYWTMWKLPMFGCTDPSQVVAELEEAKKAYPEAFTRIIGFDNVRQVQCISFIAYKPASYDA.

The N-terminal 54 residues, 1–54, are a transit peptide targeting the chloroplast; it reads MASMMSNAAVVGRTTPAQASMVAPFTGLKSVSAFPVTKKSNDITSIASNGGRVQ.

Belongs to the RuBisCO small chain family. In terms of assembly, heterohexadecamer of 8 large and 8 small subunits.

Its subcellular location is the plastid. It is found in the chloroplast. In terms of biological role, ruBisCO catalyzes two reactions: the carboxylation of D-ribulose 1,5-bisphosphate, the primary event in carbon dioxide fixation, as well as the oxidative fragmentation of the pentose substrate. Both reactions occur simultaneously and in competition at the same active site. Although the small subunit is not catalytic it is essential for maximal activity. This is Ribulose bisphosphate carboxylase small subunit, chloroplastic 2 from Mesembryanthemum crystallinum (Common ice plant).